Reading from the N-terminus, the 77-residue chain is MKKLVIALCLMMVLAVMVEEAEARWCFRVCYRGICYRKCRGKRNEVRQYRDRGYDVRAIPDETFFTRQDEDEDDDEE.

Residues 1–23 (MKKLVIALCLMMVLAVMVEEAEA) form the signal peptide. Disulfide bonds link Cys26/Cys39 and Cys30/Cys35. An Arginine amide modification is found at Arg40. The propeptide occupies 41 to 77 (GKRNEVRQYRDRGYDVRAIPDETFFTRQDEDEDDDEE).

It belongs to the tachyplesin/polyphemusin family. In terms of tissue distribution, hemocytes.

It is found in the secreted. Its function is as follows. Significantly inhibits the growth of Gram-negative and Gram-positive bacteria. In Tachypleus tridentatus (Japanese horseshoe crab), this protein is Tachyplesin-2.